A 340-amino-acid chain; its full sequence is MEFDAVLLLSFGGPEGPDQVRPFLENVTRGRGVPPERLDAVAEHYMHFGGVSPINGINRALVTELRAEVGLPVYFGNRNWEPYVEDTVMAMRDNGVKRAAVFATSAWSGYSGCTQYVEDIARARRAAGPDAPELVKLRSYFDHPLFVEMFADAIAAAATTVPKDARLVFTAHSIPVAADRRCGPGLYSRQVAYAASLVAAAAGYDDYDLAWQSRSGPPQVPWLEPDVADHLETLRAGGVKAVIVCPIGFVADHIEVVWDLDSELRAQAQGAGIALARAATPNADRRFARLARGLIEELRSGGEPARVGGPDPVFGCLAGINGEPCRPPHCAARETAAQGA.

Residues Ser52 and Tyr116 each coordinate Fe-coproporphyrin III. Residues His172 and Glu255 each contribute to the Fe(2+) site.

Belongs to the ferrochelatase family.

Its subcellular location is the cytoplasm. It catalyses the reaction Fe-coproporphyrin III + 2 H(+) = coproporphyrin III + Fe(2+). The protein operates within porphyrin-containing compound metabolism; protoheme biosynthesis. Functionally, involved in coproporphyrin-dependent heme b biosynthesis. Catalyzes the insertion of ferrous iron into coproporphyrin III to form Fe-coproporphyrin III. The polypeptide is Coproporphyrin III ferrochelatase (Mycobacterium marinum (strain ATCC BAA-535 / M)).